A 1759-amino-acid polypeptide reads, in one-letter code: Histone-lysine N-methyltransferase ASHH2 (1759 aa).

Composition is skewed to basic and acidic residues over residues 154–165 (QEKEAPQAKEDE), 197–206 (ETTKHIKPDE), and 215–224 (RFDDGGKEGR). Disordered stretches follow at residues 154-181 (QEKE…GIDT), 197-237 (ETTK…GSSD), 437-482 (CEAG…IESI), 515-556 (SNNI…NRNI), and 738-816 (DELR…VGRI). Residues 462-472 (SARHLRKSSRK) show a composition bias toward basic residues. Positions 530 to 556 (RSQGNLNNGEHNRSSHNGNVEGSNRNI) are enriched in polar residues. Over residues 758–775 (KKAKHPKSKSNGTKKGKS) the composition is skewed to basic residues. Basic and acidic residues-rich tracts occupy residues 776–797 (KFSE…EQRK) and 804–816 (GRDD…VGRI). A CW-type zinc finger spans residues 859–912 (YSTESAWVRCDDCFKWRRIPASVVGSIDESSRWICMNNSDKRFADCSKSQEMSN). Zn(2+)-binding residues include Cys-868, Cys-871, Cys-893, and Cys-904. Residues 974–1024 (DEIMVCHCKPSPDGRLGCGEECLNRMLNIECLQGTCPAGDLCSNQQFQKRK) enclose the AWS domain. An SET domain is found at 1026-1143 (VKFERFQSGK…KGQELTFDYN (118 aa)). Tyr-1142 is a binding site for S-adenosyl-L-methionine. The Post-SET domain maps to 1151 to 1167 (AAKKCYCGSSHCRGYIG). Disordered regions lie at residues 1225 to 1253 (GYKD…PPPL), 1271 to 1345 (AVQQ…PGVN), 1496 to 1606 (ERSE…FSSP), and 1727 to 1759 (KQSV…KLNS). The segment covering 1232–1241 (DNTQTQSSVS) has biased composition (polar residues). Positions 1284–1293 (STSPTSSSLS) are enriched in low complexity. The span at 1304–1316 (KTTKHGSGEDKKI) shows a compositional bias: basic and acidic residues. Over residues 1317–1326 (LPRPRPRMKT) the composition is skewed to basic residues. The span at 1511–1521 (ASQEPRYDHQS) shows a compositional bias: basic and acidic residues. Positions 1530–1556 (SVTSSKAATPETASVSEGYSEPNSGLP) are enriched in polar residues. Basic and acidic residues predominate over residues 1566–1577 (RWDQPSKTKEQR). The span at 1581-1594 (ILSQQTDETNGNQD) shows a compositional bias: polar residues.

The protein belongs to the class V-like SAM-binding methyltransferase superfamily. Histone-lysine methyltransferase family. SET2 subfamily. As to quaternary structure, interacts with FRI and SUF4, two components of the transcription activator complex FRI-C, and with SWC6, a component of the SWR1 chromatin-remodeling complex. Interacts with BZR2/BES1 and IWS1. In terms of tissue distribution, ubiquitous, with higher levels in young tissues, including shoot and root apex. Expressed in ovules, tapetum layer and microspores.

The protein resides in the nucleus. Its subcellular location is the chromosome. It is found in the centromere. It carries out the reaction N(6)-methyl-L-lysyl(36)-[histone H3] + S-adenosyl-L-methionine = N(6),N(6)-dimethyl-L-lysyl(36)-[histone H3] + S-adenosyl-L-homocysteine + H(+). The catalysed reaction is N(6),N(6)-dimethyl-L-lysyl(36)-[histone H3] + S-adenosyl-L-methionine = N(6),N(6),N(6)-trimethyl-L-lysyl(36)-[histone H3] + S-adenosyl-L-homocysteine + H(+). Its function is as follows. Histone methyltransferase involved in di and tri-methylation of 'Lys-36' of histone H3 (H3K36me2 and H3K36me3). Binds to H3 already mono- or di-methylated on 'Lys-4'(H3K4me1 or H3K4me2), but not to H3K4me3. H3K4me and H3K36me represent specific tags for epigenetic transcriptional activation. Positively regulates FLC transcription to prevent early flowering transition. Required for flowering transition in response to vernalization and for the maintenance of FLC expression in late embryos, but dispensable for the initial reactivation in early embryos during reprogramming. Also seems to modulate several traits including floral organ size, root size and dormancy. Promotes apical dominance. Directly involved in the tri-methylation of 'Lys-36' of histone H3 (H3K36me3) at LAZ5 chromatin to maintain a transcriptionally active state of LAZ5, a TIR-NB-LRR protein involved in innate immunity. Required for brassinosteroid (BR)-induced gene expression and histone H3 trimethylation on 'Lys-36' (H3K36me3) in BR-regulated genes. This Arabidopsis thaliana (Mouse-ear cress) protein is Histone-lysine N-methyltransferase ASHH2.